A 513-amino-acid polypeptide reads, in one-letter code: PPE family protein PPE4 (513 aa).

The next 3 membrane-spanning stretches (helical) occupy residues 233 to 253, 277 to 297, and 309 to 329; these read IIIA…PLLF, FLLP…PIVL, and LAAA…AVTG. 2 disordered regions span residues 395-446 and 469-513; these read AAAA…ERGA and LAGD…HDSK.

This sequence belongs to the mycobacterial PPE family.

The protein localises to the cell membrane. Important for the siderophore-mediated iron-acquisition function of ESX-3. The chain is PPE family protein PPE4 (PPE4) from Mycobacterium tuberculosis (strain CDC 1551 / Oshkosh).